A 2624-amino-acid polypeptide reads, in one-letter code: Highly reducing polyketide synthase ALT1 (2624 aa).

Positions 28–449 (VLPLAIVGMG…GSNAHCILES (422 aa)) constitute a Ketosynthase family 3 (KS3) domain. The For beta-ketoacyl synthase activity role is filled by C200. A disordered region spans residues 289–308 (VRGTSSNSDGKTPGMSMPSS). Catalysis depends on for beta-ketoacyl synthase activity residues H335 and H372. Polar residues predominate over residues 523-544 (ESYSNHHTLTETTNPSNNTATN). The disordered stretch occupies residues 523 to 545 (ESYSNHHTLTETTNPSNNTATNG). The tract at residues 639 to 945 (VFTGQGAQWA…GYTPAMIRGK (307 aa)) is malonyl-CoA:ACP transacylase (MAT) domain. The segment at 1009–1140 (HELLGSQTLE…GQVRPGRDAH (132 aa)) is N-terminal hotdog fold. Positions 1009-1301 (HELLGSQTLE…LEGGKFSPIE (293 aa)) are dehydratase (DH) domain. Residues 1009–1306 (HELLGSQTLE…FSPIEVDDGI (298 aa)) form the PKS/mFAS DH domain. H1041 functions as the Proton acceptor; for dehydratase activity in the catalytic mechanism. Residues 1157–1306 (QYPRPVDSLY…FSPIEVDDGI (150 aa)) are C-terminal hotdog fold. The active-site Proton donor; for dehydratase activity is D1217. The methyltransferase (CMet) domain stretch occupies residues 1493–1599 (LEIGAGTGGA…RKLLAPEGYL (107 aa)). The enoyl reductase (ER) (ER) domain stretch occupies residues 1895-2205 (GLLQTLKWVD…KGTHLGKIVV (311 aa)). Residues 2230-2509 (TYVLVGGLGG…DSDALRFFIT (280 aa)) are ketoreductase (KR) domain. The region spanning 2522-2600 (ASLDLVTRTI…GLAKLILDAL (79 aa)) is the Carrier domain. At S2559 the chain carries O-(pantetheine 4'-phosphoryl)serine.

It participates in mycotoxin biosynthesis. In terms of biological role, highly reducing polyketide synthase; part of the gene cluster that mediates the biosynthesis of the host-selective toxins (HSTs) AAL-toxins, sphinganine-analog mycotoxins responsible for Alternaria stem canker on tomato by the tomato pathotype. The biosynthesis starts with the polyketide synthase ALT1-catalyzed C-16 carbon chain assembly from one starter acetyl-CoA unit with malonyl-CoA extender units. ALT1 also selectively transfers methyl groups at the first and the third cycle of chain elongation for AAL toxin. The C-16 polyketide chain is released from the enzyme by a nucleophilic attack of a carbanion, which is derived from R-carbon of glycin by decarboxylation, on the carbonyl carbon of polyketide acyl chain. This step is probably catalyzed by a pyridoxal 5'-phosphate-dependent aminoacyl transferase ALT4. The respective functions of the other enzymes encoded by the cluster have still to be elucidated. The sphingosine N-acyltransferase-like protein ALT7 seems not to act as a resistance/self-tolerance factor against the toxin in the toxin biosynthetic gene cluster, contrary to what is expected. The protein is Highly reducing polyketide synthase ALT1 of Alternaria alternata (Alternaria rot fungus).